The following is a 755-amino-acid chain: Exocyst complex component 3 (755 aa).

Coiled-coil stretches lie at residues 34–62 (DQLD…AAIQ) and 618–649 (RAVM…QLRF). N6-acetyllysine is present on Lys38.

Belongs to the SEC6 family. In terms of assembly, the exocyst complex is composed of EXOC1, EXOC2, EXOC3, EXOC4, EXOC5, EXOC6, EXOC7 and EXOC8. Interacts with EXOC3L1. Interacts with BIRC6/bruce. Interacts with MYRIP. Interacts with SLC6A9. In terms of tissue distribution, widely expressed, with highest levels in kidney, followed by brain (at protein level).

The protein resides in the cytoplasm. It is found in the perinuclear region. Its subcellular location is the cell projection. It localises to the growth cone. The protein localises to the neuron projection. The protein resides in the midbody. It is found in the golgi apparatus. Component of the exocyst complex involved in the docking of exocytic vesicles with fusion sites on the plasma membrane. In Rattus norvegicus (Rat), this protein is Exocyst complex component 3 (Exoc3).